Here is a 43-residue protein sequence, read N- to C-terminus: Protein PsbN (43 aa).

A helical membrane pass occupies residues 5–27 (TIFSIFFSCLLIGLTGYSLYTSF).

The protein belongs to the PsbN family.

It localises to the plastid. It is found in the chloroplast thylakoid membrane. In terms of biological role, may play a role in photosystem I and II biogenesis. The polypeptide is Protein PsbN (Mesostigma viride (Green alga)).